A 1099-amino-acid chain; its full sequence is Contactin-5 (1099 aa).

The first 18 residues, 1 to 18 (MASSWRLILFLSFTSCLS), serve as a signal peptide directing secretion. 6 consecutive Ig-like C2-type domains span residues 99–190 (PVFV…ATLQ), 196–282 (NFSG…RVLS), 300–385 (PKIE…GQLQ), 390–474 (PHWV…AELK), 480–569 (PSFE…VSVK), and 571–660 (PTRI…DSVS). Residues Cys123 and Cys173 are joined by a disulfide bond. Residues Asn138 and Asn196 are each glycosylated (N-linked (GlcNAc...) asparagine). Disulfide bonds link Cys217–Cys269 and Cys322–Cys369. N-linked (GlcNAc...) asparagine glycans are attached at residues Asn397, Asn449, and Asn540. 3 disulfides stabilise this stretch: Cys411–Cys458, Cys503–Cys551, and Cys593–Cys650. Fibronectin type-III domains lie at 673 to 771 (PPGV…TNEA), 776 to 873 (APSN…SAEG), 878 to 972 (APTD…TKRH), and 977 to 1067 (PPGN…SYAG). Asn779, Asn816, and Asn931 each carry an N-linked (GlcNAc...) asparagine glycan. Positions 958-983 (YGPPSREVSATTKRHPPSEPPGNLRW) are disordered. Asn1002 carries an N-linked (GlcNAc...) asparagine glycan. Ser1072 carries the GPI-anchor amidated serine lipid modification. A propeptide spans 1073–1099 (AQSTLHSLSKWSSVTLLLALMLPSSSW) (removed in mature form).

The protein belongs to the immunoglobulin superfamily. Contactin family. In terms of assembly, interacts with PTPRG. Specifically expressed in the nervous system. Expressed in cerebrum and cerebellum but at low level in spinal cord. In brain, it is expressed in highly restricted regions at postnatal day 7, such as the auditory pathway, including the cochlear nucleus, superior olive, inferior colliculus, medial geniculate nucleus and auditory cortex. Expressed in the accessory olfactory bulb, glomerular and mitral cell layers in the olfactory bulb, anterior thalamic nuclei, layers II-IV of the cerebral cortex, dentate gyrus of the hippocampus and external granule cells and Purkinje cells of the cerebellum. Also expressed in the piriform cortex, inferior olive and facial nucleus. Weakly or not expressed in other parts of the brain.

It localises to the cell membrane. Functionally, contactins mediate cell surface interactions during nervous system development. Has some neurite outgrowth-promoting activity in the cerebral cortical neurons but not in hippocampal neurons. Probably involved in neuronal activity in the auditory system. In Rattus norvegicus (Rat), this protein is Contactin-5 (Cntn5).